The primary structure comprises 581 residues: ATP-dependent lipid A-core flippase (581 aa).

A run of 5 helical transmembrane segments spans residues 15-35 (LWPIISPFKSGLIISIVALII), 62-82 (ISIWMPLAIVALMLSRGSSGF), 152-172 (IIGLFFMMFFHSWKLSSVLII), 252-272 (IIIQFISSITLAVILYISSLP), and 274-294 (IIDELTAGTITVIFTSMIALM). The ABC transmembrane type-1 domain occupies 27–309 (IISIVALIIN…LTNVNANFQK (283 aa)). One can recognise an ABC transporter domain in the interval 341-577 (IKFKNITFTY…KGVYAQIYRL (237 aa)). Position 375 to 382 (375 to 382 (GSSGAGKS)) interacts with ATP.

The protein belongs to the ABC transporter superfamily. Lipid exporter (TC 3.A.1.106) family. As to quaternary structure, homodimer.

The protein resides in the cell membrane. The catalysed reaction is ATP + H2O + lipid A-core oligosaccharideSide 1 = ADP + phosphate + lipid A-core oligosaccharideSide 2.. In terms of biological role, involved in lipopolysaccharide (LPS) biosynthesis. Translocates lipid A-core from the inner to the outer leaflet of the inner membrane. Transmembrane domains (TMD) form a pore in the inner membrane and the ATP-binding domain (NBD) is responsible for energy generation. The sequence is that of ATP-dependent lipid A-core flippase from Wigglesworthia glossinidia brevipalpis.